The primary structure comprises 210 residues: Oxygen-insensitive NADPH nitroreductase (210 aa).

Residue 150-155 (GVSLMG) coordinates NADP(+).

Belongs to the nitroreductase family.

In terms of biological role, reduction of a variety of nitroaromatic compounds using NADPH as source of reducing equivalents; two electrons are transferred. Capable of reducing metronidazole; inactive RdxA renders the bacterium resistant to this compound. The reduction of metronidazole generates hydroxylamine, a potent mutagen and bactericide. This chain is Oxygen-insensitive NADPH nitroreductase (rdxA), found in Helicobacter pylori (strain ATCC 700392 / 26695) (Campylobacter pylori).